A 250-amino-acid chain; its full sequence is UPF0309 protein BH0227 (250 aa).

An SIS domain is found at 31–214; sequence VAESIQNGGI…KRMADNGYEP (184 aa).

It belongs to the UPF0309 family.

The protein is UPF0309 protein BH0227 of Halalkalibacterium halodurans (strain ATCC BAA-125 / DSM 18197 / FERM 7344 / JCM 9153 / C-125) (Bacillus halodurans).